The chain runs to 255 residues: PHD finger protein ALFIN-LIKE 4 (255 aa).

Methionine 1 is modified (N-acetylmethionine). Residues 145–200 are disordered; it reads GKDKSSVSNNSSNRSKSSSKRGSESRAKFSKPEPKDDEEEEEEGVEEEDEDEQGET. The segment covering 150–160 has biased composition (low complexity); it reads SVSNNSSNRSK. Over residues 165-178 the composition is skewed to basic and acidic residues; that stretch reads RGSESRAKFSKPEP. Residues 179–198 are compositionally biased toward acidic residues; that stretch reads KDDEEEEEEGVEEEDEDEQG. Residues 199–251 form a PHD-type zinc finger; that stretch reads ETQCGACGESYAADEFWICCDLCEMWFHGKCVKITPARAEHIKQYKCPSCSNK.

This sequence belongs to the Alfin family. In terms of assembly, interacts with H3K4me3 and to a lesser extent with H3K4me2. In terms of tissue distribution, ubiquitously expressed.

It is found in the nucleus. In terms of biological role, histone-binding component that specifically recognizes H3 tails trimethylated on 'Lys-4' (H3K4me3), which mark transcription start sites of virtually all active genes. In Arabidopsis thaliana (Mouse-ear cress), this protein is PHD finger protein ALFIN-LIKE 4 (AL4).